The chain runs to 307 residues: MLKNKHLLDPSDFTIEEFDEIFKLAHQIMTNPKEYQNICNGKILATLFYEPSTRTRLSFESAMIRLGGQVIGFSEPNSSSVSKGESLRDTIKTVNCYADLIAMRHPLEGSAKVASMYSDIPVINAGDGGHQHPTQTLTDLLTIKEYKGNLEGNTIALCGDLKFGRTVHSLIKALSRYKNNKFILISPIELRIPNYIREQILEKNNIEYKEITSLEEGIKEADILYMTRIQRERFVDQSEYERLKDVYVLDEAKMKGAKEDMMVLHPLPRVNEIAYEVDEDSRAFYFKQAKCGMYVRMALMAKLLGEA.

Carbamoyl phosphate is bound by residues R54 and T55. K83 is an L-aspartate binding site. The carbamoyl phosphate site is built by R104, H132, and Q135. L-aspartate contacts are provided by R165 and R228. L267 and P268 together coordinate carbamoyl phosphate.

This sequence belongs to the aspartate/ornithine carbamoyltransferase superfamily. ATCase family. In terms of assembly, heterododecamer (2C3:3R2) of six catalytic PyrB chains organized as two trimers (C3), and six regulatory PyrI chains organized as three dimers (R2).

The catalysed reaction is carbamoyl phosphate + L-aspartate = N-carbamoyl-L-aspartate + phosphate + H(+). It functions in the pathway pyrimidine metabolism; UMP biosynthesis via de novo pathway; (S)-dihydroorotate from bicarbonate: step 2/3. Its function is as follows. Catalyzes the condensation of carbamoyl phosphate and aspartate to form carbamoyl aspartate and inorganic phosphate, the committed step in the de novo pyrimidine nucleotide biosynthesis pathway. This is Aspartate carbamoyltransferase catalytic subunit from Clostridium perfringens (strain SM101 / Type A).